Here is a 123-residue protein sequence, read N- to C-terminus: Small ribosomal subunit protein uS13 (123 aa).

Positions 97 to 123 are disordered; that stretch reads PCRGQRTHTNSRTRKGPRRGVMAKKKK.

It belongs to the universal ribosomal protein uS13 family. Part of the 30S ribosomal subunit. Forms a loose heterodimer with protein S19. Forms two bridges to the 50S subunit in the 70S ribosome.

In terms of biological role, located at the top of the head of the 30S subunit, it contacts several helices of the 16S rRNA. In the 70S ribosome it contacts the 23S rRNA (bridge B1a) and protein L5 of the 50S subunit (bridge B1b), connecting the 2 subunits; these bridges are implicated in subunit movement. Contacts the tRNAs in the A and P-sites. The sequence is that of Small ribosomal subunit protein uS13 from Solidesulfovibrio magneticus (strain ATCC 700980 / DSM 13731 / RS-1) (Desulfovibrio magneticus).